We begin with the raw amino-acid sequence, 216 residues long: 3-keto-L-gulonate-6-phosphate decarboxylase UlaD (216 aa).

Residue Asp-11 participates in substrate binding. Glu-33 and Asp-62 together coordinate Mg(2+). Arg-192 lines the substrate pocket.

It belongs to the HPS/KGPDC family. KGPDC subfamily. Homodimer. Mg(2+) serves as cofactor.

It catalyses the reaction 3-dehydro-L-gulonate 6-phosphate + H(+) = L-xylulose 5-phosphate + CO2. It participates in cofactor degradation; L-ascorbate degradation; D-xylulose 5-phosphate from L-ascorbate: step 2/4. In terms of biological role, catalyzes the decarboxylation of 3-keto-L-gulonate-6-P into L-xylulose-5-P. Is involved in the anaerobic L-ascorbate utilization. The protein is 3-keto-L-gulonate-6-phosphate decarboxylase UlaD of Salmonella choleraesuis (strain SC-B67).